A 969-amino-acid polypeptide reads, in one-letter code: Bifunctional glutamine synthetase adenylyltransferase/adenylyl-removing enzyme (969 aa).

The interval Met1–His456 is adenylyl removase. The adenylyl transferase stretch occupies residues Glu466 to Lys969.

It belongs to the GlnE family. Mg(2+) serves as cofactor.

It catalyses the reaction [glutamine synthetase]-O(4)-(5'-adenylyl)-L-tyrosine + phosphate = [glutamine synthetase]-L-tyrosine + ADP. The catalysed reaction is [glutamine synthetase]-L-tyrosine + ATP = [glutamine synthetase]-O(4)-(5'-adenylyl)-L-tyrosine + diphosphate. Its function is as follows. Involved in the regulation of glutamine synthetase GlnA, a key enzyme in the process to assimilate ammonia. When cellular nitrogen levels are high, the C-terminal adenylyl transferase (AT) inactivates GlnA by covalent transfer of an adenylyl group from ATP to specific tyrosine residue of GlnA, thus reducing its activity. Conversely, when nitrogen levels are low, the N-terminal adenylyl removase (AR) activates GlnA by removing the adenylyl group by phosphorolysis, increasing its activity. The regulatory region of GlnE binds the signal transduction protein PII (GlnB) which indicates the nitrogen status of the cell. This chain is Bifunctional glutamine synthetase adenylyltransferase/adenylyl-removing enzyme, found in Nitrosococcus oceani (strain ATCC 19707 / BCRC 17464 / JCM 30415 / NCIMB 11848 / C-107).